Reading from the N-terminus, the 92-residue chain is Putative pterin-4-alpha-carbinolamine dehydratase (92 aa).

The protein belongs to the pterin-4-alpha-carbinolamine dehydratase family.

It carries out the reaction (4aS,6R)-4a-hydroxy-L-erythro-5,6,7,8-tetrahydrobiopterin = (6R)-L-erythro-6,7-dihydrobiopterin + H2O. The sequence is that of Putative pterin-4-alpha-carbinolamine dehydratase from Natronomonas pharaonis (strain ATCC 35678 / DSM 2160 / CIP 103997 / JCM 8858 / NBRC 14720 / NCIMB 2260 / Gabara) (Halobacterium pharaonis).